Consider the following 104-residue polypeptide: Flagellar hook-basal body complex protein FliE (104 aa).

This sequence belongs to the FliE family.

Its subcellular location is the bacterial flagellum basal body. This chain is Flagellar hook-basal body complex protein FliE, found in Salmonella heidelberg (strain SL476).